A 284-amino-acid polypeptide reads, in one-letter code: MTAQIIDGKAIAQSIRTTLKQKVTQRRQAGFRAPGLAVILVGSDAASQVYVGSKRKACEEVGFESQSFDLDTETTEAELLALIDECNANPSIDGILVQLPLPAHIDDSKVIERIRPDKDVDGFHPYNVGRLAQRIPVLRSCTPMGIMTLIKSTGIDTYGLDATVVGASNIVGRPMTLELLLAGCTTTTCHRFTKNLEQKVRQADLLVVAVGKPGFIPGDWIKPGAIVIDVGINRLENGSLVGDVEFNVAAEKAAFITPVPGGVGPMTIASLLENTLYACEQYHS.

NADP(+)-binding positions include Gly166–Ser168 and Ile232.

It belongs to the tetrahydrofolate dehydrogenase/cyclohydrolase family. In terms of assembly, homodimer.

The catalysed reaction is (6R)-5,10-methylene-5,6,7,8-tetrahydrofolate + NADP(+) = (6R)-5,10-methenyltetrahydrofolate + NADPH. The enzyme catalyses (6R)-5,10-methenyltetrahydrofolate + H2O = (6R)-10-formyltetrahydrofolate + H(+). Its pathway is one-carbon metabolism; tetrahydrofolate interconversion. Its function is as follows. Catalyzes the oxidation of 5,10-methylenetetrahydrofolate to 5,10-methenyltetrahydrofolate and then the hydrolysis of 5,10-methenyltetrahydrofolate to 10-formyltetrahydrofolate. This Shewanella frigidimarina (strain NCIMB 400) protein is Bifunctional protein FolD.